Consider the following 445-residue polypeptide: Glucose-6-phosphate isomerase (445 aa).

The Proton donor role is filled by glutamate 284. Residues histidine 305 and lysine 419 contribute to the active site.

The protein belongs to the GPI family.

It localises to the cytoplasm. The catalysed reaction is alpha-D-glucose 6-phosphate = beta-D-fructose 6-phosphate. It participates in carbohydrate biosynthesis; gluconeogenesis. Its pathway is carbohydrate degradation; glycolysis; D-glyceraldehyde 3-phosphate and glycerone phosphate from D-glucose: step 2/4. Catalyzes the reversible isomerization of glucose-6-phosphate to fructose-6-phosphate. The polypeptide is Glucose-6-phosphate isomerase (Leptospira interrogans serogroup Icterohaemorrhagiae serovar Lai (strain 56601)).